A 785-amino-acid polypeptide reads, in one-letter code: Endonuclease MutS2 (785 aa).

335–342 (GPNTGGKT) provides a ligand contact to ATP. The Smr domain occupies 710–785 (LDLRGERYED…GNGVTIVEFK (76 aa)).

This sequence belongs to the DNA mismatch repair MutS family. MutS2 subfamily. As to quaternary structure, homodimer. Binds to stalled ribosomes, contacting rRNA.

In terms of biological role, endonuclease that is involved in the suppression of homologous recombination and thus may have a key role in the control of bacterial genetic diversity. Functionally, acts as a ribosome collision sensor, splitting the ribosome into its 2 subunits. Detects stalled/collided 70S ribosomes which it binds and splits by an ATP-hydrolysis driven conformational change. Acts upstream of the ribosome quality control system (RQC), a ribosome-associated complex that mediates the extraction of incompletely synthesized nascent chains from stalled ribosomes and their subsequent degradation. Probably generates substrates for RQC. The sequence is that of Endonuclease MutS2 from Listeria welshimeri serovar 6b (strain ATCC 35897 / DSM 20650 / CCUG 15529 / CIP 8149 / NCTC 11857 / SLCC 5334 / V8).